The sequence spans 149 residues: Natriuretic peptides A (149 aa).

Residues 1–23 (MGSPIAASFLLFLAVQLLGQTGA) form the signal peptide. 2 consecutive propeptides follow at residues 24 to 121 (NPVY…AAPR) and 91 to 101 (DGGALGRSPWD). Residues 49–103 (MPLEDEAESPQALSEQNAEAGAALSPLPEVPPWTGEVSPAQRDGGALGRSPWDSS) are disordered. Ser127 is modified (phosphoserine). Residues Cys128 and Cys144 are joined by a disulfide bond. Residues 145 to 149 (NSFRY) form an important for degradation of atrial natriuretic peptide by IDE region.

This sequence belongs to the natriuretic peptide family. In terms of assembly, homodimer; disulfide-linked antiparallel dimer. The precursor molecule is proteolytically cleaved by CORIN at Arg-121 to produce the atrial natriuretic peptide. Undergoes further proteolytic cleavage by unknown proteases to give rise to long-acting natriuretic peptide, vessel dilator and kaliuretic peptide. Additional processing gives rise to the auriculin and atriopeptin peptides. In the kidneys, alternative processing by an unknown protease results in the peptide urodilatin. Post-translationally, cleavage by MME initiates degradation of the factor and thereby regulates its activity. Degradation by IDE results in reduced activation of NPR1 (in vitro). During IDE degradation, the resulting products can temporarily stimulate NPR2 to produce cGMP, before the fragments are completely degraded and inactivated by IDE (in vitro). In terms of processing, degraded by IDE. Phosphorylation on Ser-127 decreases vasorelaxant activity.

Its subcellular location is the secreted. The protein localises to the perikaryon. It localises to the cell projection. Hormone that plays a key role in mediating cardio-renal homeostasis, and is involved in vascular remodeling and regulating energy metabolism. Acts by specifically binding and stimulating NPR1 to produce cGMP, which in turn activates effector proteins, such as PRKG1, that drive various biological responses. Regulates vasodilation, natriuresis, diuresis and aldosterone synthesis and is therefore essential for regulating blood pressure, controlling the extracellular fluid volume and maintaining the fluid-electrolyte balance. Also involved in inhibiting cardiac remodeling and cardiac hypertrophy by inducing cardiomyocyte apoptosis and attenuating the growth of cardiomyocytes and fibroblasts. Plays a role in female pregnancy by promoting trophoblast invasion and spiral artery remodeling in uterus, and thus prevents pregnancy-induced hypertension. In adipose tissue, acts in various cGMP- and PKG-dependent pathways to regulate lipid metabolism and energy homeostasis. This includes up-regulating lipid metabolism and mitochondrial oxygen utilization by activating the AMP-activated protein kinase (AMPK), and increasing energy expenditure by acting via MAPK11 to promote the UCP1-dependent thermogenesis of brown adipose tissue. Binds the clearance receptor NPR3 which removes the hormone from circulation. Functionally, may have a role in cardio-renal homeostasis through regulation of natriuresis, diuresis, vasodilation, and inhibiting aldosterone synthesis. In vitro, promotes the production of cGMP and induces vasodilation. May promote natriuresis, at least in part, by enhancing prostaglandin E2 synthesis resulting in the inhibition of renal Na+-K+-ATPase. However reports on the involvement of this peptide in mammal blood volume and blood pressure homeostasis are conflicting; according to a report, in vivo it is not sufficient to activate cGMP and does not inhibit collecting duct transport nor effect diuresis and natriuresis. Appears to bind to specific receptors that are distinct from the receptors bound by atrial natriuretic peptide and vessel dilator. Possibly enhances protein excretion in urine by decreasing proximal tubular protein reabsorption. In terms of biological role, may have a role in cardio-renal homeostasis through regulation of natriuresis, diuresis, and vasodilation. In vitro, promotes the production of cGMP and induces vasodilation. May promote natriuresis, at least in part, by enhancing prostaglandin E2 synthesis resulting in the inhibition of renal Na+-K+-ATPase. However reports on the involvement of this peptide in mammal blood volume and blood pressure homeostasis are conflicting; according to a report it is not sufficient to activate cGMP and does not inhibit collecting duct transport nor effect diuresis and natriuresis. Appears to bind to specific receptors that are distinct from the receptors bound by the atrial natriuretic and long-acting natriuretic peptides. Possibly functions in protein excretion in urine by maintaining the integrity of the proximal tubules and enhancing protein excretion by decreasing proximal tubular protein reabsorption. Its function is as follows. May have a role in cardio-renal homeostasis through regulation of diuresis and inhibiting aldosterone synthesis. In vitro, promotes the production of cGMP and induces vasodilation. May promote natriuresis, at least in part, by enhancing prostaglandin E2 synthesis resulting in the inhibition of renal Na+-K+-ATPase. May have a role in potassium excretion but not sodium excretion (natriuresis). Possibly enhances protein excretion in urine by decreasing proximal tubular protein reabsorption. Hormone produced in the kidneys that appears to be important for maintaining cardio-renal homeostasis. Mediates vasodilation, natriuresis and diuresis primarily in the renal system, in order to maintain the extracellular fluid volume and control the fluid-electrolyte balance. Specifically binds and stimulates cGMP production by renal transmembrane receptors, likely NPR1. Urodilatin not ANP, may be the natriuretic peptide responsible for the regulation of sodium and water homeostasis in the kidney. Functionally, may have a role in cardio-renal homeostasis through regulation of natriuresis and vasodilation. In vivo promotes natriuresis and in vitro, vasodilates renal artery strips. In terms of biological role, may have a role in cardio-renal homeostasis through regulation of regulation of natriuresis and vasodilation. In vivo promotes natriuresis. In vitro, vasodilates intestinal smooth muscle but not smooth muscle strips. Its function is as follows. May have a role in cardio-renal homeostasis through regulation of natriuresis and vasodilation. In vivo promotes natriuresis. In vitro, selectively vasodilates intestinal and vascular smooth muscle strips. May have a role in cardio-renal homeostasis through regulation of natriuresis and vasodilation. In vivo promotes natriuresis. In vitro, selectively vasodilates intestinal smooth muscle but not vascular smooth muscle strips. This chain is Natriuretic peptides A (NPPA), found in Canis lupus familiaris (Dog).